Here is a 199-residue protein sequence, read N- to C-terminus: Superoxide dismutase [Mn/Fe] 2 (199 aa).

Fe(3+)-binding residues include histidine 27, histidine 81, aspartate 161, and histidine 165. Mn(2+) contacts are provided by histidine 27, histidine 81, aspartate 161, and histidine 165.

It belongs to the iron/manganese superoxide dismutase family. Homodimer. Can also form a heterodimer with SodA. It depends on Mn(2+) as a cofactor. Requires Fe(3+) as cofactor.

It carries out the reaction 2 superoxide + 2 H(+) = H2O2 + O2. Destroys superoxide anion radicals which are normally produced within the cells and which are toxic to biological systems. Catalyzes the dismutation of superoxide anion radicals into O2 and H2O2 by successive reduction and oxidation of the transition metal ion at the active site. This chain is Superoxide dismutase [Mn/Fe] 2 (sodM), found in Staphylococcus aureus (strain bovine RF122 / ET3-1).